We begin with the raw amino-acid sequence, 542 residues long: Chaperonin GroEL 3 (542 aa).

Residues 30–33, K51, 87–91, G415, and D496 contribute to the ATP site; these read TLGP and DGTTT.

This sequence belongs to the chaperonin (HSP60) family. As to quaternary structure, forms a cylinder of 14 subunits composed of two heptameric rings stacked back-to-back. Interacts with the co-chaperonin GroES.

The protein resides in the cytoplasm. The catalysed reaction is ATP + H2O + a folded polypeptide = ADP + phosphate + an unfolded polypeptide.. In terms of biological role, together with its co-chaperonin GroES, plays an essential role in assisting protein folding. The GroEL-GroES system forms a nano-cage that allows encapsulation of the non-native substrate proteins and provides a physical environment optimized to promote and accelerate protein folding. This Rhizobium johnstonii (strain DSM 114642 / LMG 32736 / 3841) (Rhizobium leguminosarum bv. viciae) protein is Chaperonin GroEL 3.